Here is a 314-residue protein sequence, read N- to C-terminus: Cyclic di-GMP binding protein TDE_0214 (314 aa).

A PilZ domain is found at 146-234; sequence QKRRNERVVI…KTVRTEPVEG (89 aa). Residues 288–300 are compositionally biased toward polar residues; it reads TPVSSPIGTNTAP. The disordered stretch occupies residues 288–314; sequence TPVSSPIGTNTAPLTPPPADSAPEQIS.

In terms of biological role, cyclic-di-GMP binding protein that plays important roles in motility, chemotaxis, biofilm formation and virulence. This chain is Cyclic di-GMP binding protein TDE_0214, found in Treponema denticola (strain ATCC 35405 / DSM 14222 / CIP 103919 / JCM 8153 / KCTC 15104).